Reading from the N-terminus, the 166-residue chain is Phospholipase A2 inhibitor clone 02/03/06/07 (166 aa).

The N-terminal stretch at 1-19 is a signal peptide; the sequence is MRLILLSGLLLLGTFLANG. Residues 46-161 form the C-type lectin domain; sequence LKHAFLTVHK…CDDNLLVVCE (116 aa). Cystine bridges form between cysteine 83/cysteine 160 and cysteine 138/cysteine 152. N-linked (GlcNAc...) asparagine glycosylation is present at asparagine 122.

It belongs to the alpha-type phospholipase A2 inhibitor family. In terms of assembly, homotrimer; non-covalently linked. In terms of tissue distribution, expressed by the liver.

The protein localises to the secreted. Its function is as follows. This phospholipase A2 inhibitor binds directly phospholipase A2 in the presence or absence of calcium. The sequence is that of Phospholipase A2 inhibitor clone 02/03/06/07 from Lachesis muta muta (Bushmaster).